A 475-amino-acid polypeptide reads, in one-letter code: Ribulose bisphosphate carboxylase large chain (475 aa).

Residues 1–2 (MS) constitute a propeptide that is removed on maturation. The residue at position 3 (P3) is an N-acetylproline. K14 carries the post-translational modification N6,N6,N6-trimethyllysine. Positions 123 and 173 each coordinate substrate. The Proton acceptor role is filled by K175. K177 lines the substrate pocket. K201, D203, and E204 together coordinate Mg(2+). K201 carries the N6-carboxylysine modification. The active-site Proton acceptor is the H294. Substrate-binding residues include R295, H327, and S379.

It belongs to the RuBisCO large chain family. Type I subfamily. In terms of assembly, heterohexadecamer of 8 large chains and 8 small chains; disulfide-linked. The disulfide link is formed within the large subunit homodimers. The cofactor is Mg(2+). In terms of processing, the disulfide bond which can form in the large chain dimeric partners within the hexadecamer appears to be associated with oxidative stress and protein turnover.

It localises to the plastid. The protein localises to the chloroplast. It carries out the reaction 2 (2R)-3-phosphoglycerate + 2 H(+) = D-ribulose 1,5-bisphosphate + CO2 + H2O. It catalyses the reaction D-ribulose 1,5-bisphosphate + O2 = 2-phosphoglycolate + (2R)-3-phosphoglycerate + 2 H(+). Functionally, ruBisCO catalyzes two reactions: the carboxylation of D-ribulose 1,5-bisphosphate, the primary event in carbon dioxide fixation, as well as the oxidative fragmentation of the pentose substrate in the photorespiration process. Both reactions occur simultaneously and in competition at the same active site. The sequence is that of Ribulose bisphosphate carboxylase large chain from Fagopyrum esculentum subsp. ancestrale (Wild buckwheat).